The sequence spans 916 residues: Protein prickle (916 aa).

Disordered regions lie at residues 49 to 105 (PLSP…AGGS) and 127 to 176 (QHLQ…IPVD). A compositionally biased stretch (low complexity) spans 145-156 (SSPSPALSSSIT). Residues 157-171 (TGGGGVTRGGGGGGH) show a composition bias toward gly residues. Residues 167-275 (GGGGHIIPVD…TVKQLATNQI (109 aa)) enclose the PET domain. LIM zinc-binding domains lie at 274–338 (QICD…ETLK), 339–399 (PRCS…MFAE), and 400–462 (YCDF…GEPP). Disordered stretches follow at residues 460–593 (EPPT…PNHR), 635–671 (VIPGPSIAKTNPALTSSMPELSQSLQQQQQQQQQPQS), 692–725 (DAIQNASDDASHSIVELPTPPPIVSNTRDPENLP), and 763–870 (RSKS…DTVY). Polar residues-rich tracts occupy residues 507-517 (SPISERSTPHS), 526-569 (EMST…SRTL), and 642-654 (AKTNPALTSSMPE). A compositionally biased stretch (low complexity) spans 655–671 (LSQSLQQQQQQQQQPQS). Positions 777–793 (RSSKSKRRSSHHHQHHR) are enriched in basic residues. Low complexity predominate over residues 796–805 (GESSSYSGTS). Positions 829–844 (VPDVEFIEHQDHHRGD) are enriched in basic and acidic residues. Positions 852–867 (RSVCSTCSSSSSSADD) are enriched in low complexity.

This sequence belongs to the prickle / espinas / testin family. As to quaternary structure, interacts with dsh; PET and LIM domains interact with dsh DEP domain, in wing cells. Interacts with Vang in photoreceptor cells.

Its subcellular location is the cell membrane. Its function is as follows. Acts in a planar cell polarity (PCP) complex; polarization along the apical/basal axis of epithelial cells. PCP signaling in the wing disk requires the receptor fz and the cytoplasmic proteins dsh and pk. These act in a feedback loop leading to activation of the jnk cascade and subsequent polarized arrangement of hairs and bristles. Dgo and pk compete with one another for dsh binding, thereby modulating fz dsh activity and ensuring tight control over fz PCP signaling. Vang, stan and pk function together to regulate the establishment of tissue polarity in the adult eye. In Aedes aegypti (Yellowfever mosquito), this protein is Protein prickle.